We begin with the raw amino-acid sequence, 71 residues long: UPF0346 protein SSU05_1322 (71 aa).

The protein belongs to the UPF0346 family.

The sequence is that of UPF0346 protein SSU05_1322 from Streptococcus suis (strain 05ZYH33).